The primary structure comprises 38 residues: Photosystem II reaction center protein L (38 aa).

A helical transmembrane segment spans residues 17–37 (SLYWGLLLIFVLAVLFSSYFF).

The protein belongs to the PsbL family. In terms of assembly, PSII is composed of 1 copy each of membrane proteins PsbA, PsbB, PsbC, PsbD, PsbE, PsbF, PsbH, PsbI, PsbJ, PsbK, PsbL, PsbM, PsbT, PsbX, PsbY, PsbZ, Psb30/Ycf12, at least 3 peripheral proteins of the oxygen-evolving complex and a large number of cofactors. It forms dimeric complexes.

The protein resides in the plastid. The protein localises to the chloroplast thylakoid membrane. One of the components of the core complex of photosystem II (PSII). PSII is a light-driven water:plastoquinone oxidoreductase that uses light energy to abstract electrons from H(2)O, generating O(2) and a proton gradient subsequently used for ATP formation. It consists of a core antenna complex that captures photons, and an electron transfer chain that converts photonic excitation into a charge separation. This subunit is found at the monomer-monomer interface and is required for correct PSII assembly and/or dimerization. The protein is Photosystem II reaction center protein L of Ephedra sinica (Chinese ephedra).